Here is a 517-residue protein sequence, read N- to C-terminus: Ribonuclease Y (517 aa).

Residues 1 to 21 traverse the membrane as a helical segment; the sequence is MIEFLIGLIAAVVGILVGYLI. The KH domain maps to 207 to 271; it reads LINVVNIKND…IAVRTVELLV (65 aa). Residues 333-426 enclose the HD domain; sequence ALIHSLEVAH…VCTADVLSAA (94 aa).

It belongs to the RNase Y family.

It is found in the cell membrane. Functionally, endoribonuclease that initiates mRNA decay. This chain is Ribonuclease Y, found in Campylobacter hominis (strain ATCC BAA-381 / DSM 21671 / CCUG 45161 / LMG 19568 / NCTC 13146 / CH001A).